The primary structure comprises 759 residues: Olfactomedin-like protein 2B (759 aa).

An N-terminal signal peptide occupies residues 1–20 (MAKSLLLVLCFALVTTLGWG). Coiled-coil stretches lie at residues 40-68 (TEDE…KVKA) and 179-209 (KLEE…MNKR). 2 N-linked (GlcNAc...) asparagine glycosylation sites follow: Asn187 and Asn213. 2 disordered regions span residues 346-396 (TRRP…VSAS) and 456-494 (THTA…EEED). Positions 356 to 396 (AAVTADAGTTSAGTPTTALPSARLPASTAAPSTPDPAVSAS) are enriched in low complexity. Residues 502-759 (RCKDTLSTIT…QVTYHVIFAY (258 aa)) form the Olfactomedin-like domain. A disulfide bond links Cys503 and Cys689. Asn704 carries N-linked (GlcNAc...) asparagine glycosylation.

Homodimer. Binds to heparin and chondroitin sulfate E. In terms of processing, O-glycosylated and N-glycosylated.

It localises to the secreted. The sequence is that of Olfactomedin-like protein 2B (OLFML2B) from Bos taurus (Bovine).